The chain runs to 155 residues: Large ribosomal subunit protein bL9c (155 aa).

This sequence belongs to the bacterial ribosomal protein bL9 family.

It localises to the plastid. It is found in the chloroplast. Functionally, binds to the 23S rRNA. This chain is Large ribosomal subunit protein bL9c, found in Porphyra purpurea (Red seaweed).